The primary structure comprises 601 residues: MDNRRLLYSISISLVILVLFQVIASYVLPPPKKAPPHPATQTAQTQPVSGQPAPGVPAPSAVPPAAAPGGVAAKIPAGPRLAISTPLLRGSMSLVGARLDDLVLTRYHQTVKKTSPLVQLLSQAGTAKSYYVQFGWDAAPGSSLKVPGPDTVWTSSGGDLSPAHPVTLSWNNGAGVTFELKLAVDRQYLFTVQQRVINHGAAAVEVYPWSRIRRDFLPEEPGSFTLHKGPIGVFHGTLHEMGYEGVKSGGKHPAAGDAPGTAYQTTNLGGWAGITGKYWLTALIPSQGREVIGAYRYLADPGQPEHGGYQVDYMTAKPVDAAPGATASTTTHVFAGAKVLSILSHYETQYRIPLFERAIDFGWFFFLTKPIFIALDYLAGVFGNMGVAIIVFTIGLKLVLFPLVRTSYRSMARMRAITPKVQALRERYKDDQMQQQKEIMALYKAEGVNPAAGCLPMLPQIPIFFSLYKVIFISIGMRHAPFVLWIHDLSAEDPTNIFNLFGLLPFHPSALSPFLHLGILPIIMGITMWGQQRLNPPPPDPTQAKMMQFMPVIFTFMLGRFAAGLVLYYCVNNTLTILQQWTIMRGTNAAPRAAANLNAKG.

A helical membrane pass occupies residues Ile10–Pro30. The interval Ala34–Pro63 is disordered. Residues Ala39–Ala53 are compositionally biased toward low complexity. The span at Pro54–Pro63 shows a compositional bias: pro residues. 4 helical membrane passes run Phe382–Val404, Leu455–Ile475, Ala510–Gly530, and Phe549–Tyr569.

It belongs to the OXA1/ALB3/YidC family. Type 1 subfamily. Interacts with the Sec translocase complex via SecD. Specifically interacts with transmembrane segments of nascent integral membrane proteins during membrane integration.

The protein localises to the cell inner membrane. Functionally, required for the insertion and/or proper folding and/or complex formation of integral membrane proteins into the membrane. Involved in integration of membrane proteins that insert both dependently and independently of the Sec translocase complex, as well as at least some lipoproteins. Aids folding of multispanning membrane proteins. The chain is Membrane protein insertase YidC from Acidiphilium cryptum (strain JF-5).